A 125-amino-acid chain; its full sequence is Small ribosomal subunit protein uS12m (125 aa).

The disordered stretch occupies residues 1-27 (MPTKNQLIRHGREEKRRTDRTRALDQC). Basic and acidic residues predominate over residues 10 to 23 (HGREEKRRTDRTRA).

This sequence belongs to the universal ribosomal protein uS12 family.

Its subcellular location is the mitochondrion. Functionally, protein S12 is involved in the translation initiation step. The protein is Small ribosomal subunit protein uS12m (RPS12) of Triticum aestivum (Wheat).